The following is a 533-amino-acid chain: Probable bifunctional tRNA threonylcarbamoyladenosine biosynthesis protein (533 aa).

Residues 1 to 328 are kae1; it reads MRILGIEGTA…FRPDAVTVTW (328 aa). Residues histidine 112 and histidine 116 each coordinate Fe cation. Residues 133–137, aspartate 165, glycine 178, glutamate 182, and asparagine 261 each bind L-threonylcarbamoyladenylate; that span reads NASGA. Aspartate 289 contacts Fe cation. Residues 339-533 form the Protein kinase domain; sequence PATLDKTPVR…RDIESRGRYH (195 aa). Residues 347–354 and lysine 363 each bind ATP; that span reads VRGAEAIV. Aspartate 452 acts as the Proton acceptor; for kinase activity in catalysis.

This sequence in the N-terminal section; belongs to the KAE1 / TsaD family. In the C-terminal section; belongs to the protein kinase superfamily. Tyr protein kinase family. BUD32 subfamily. As to quaternary structure, component of the KEOPS complex that consists of Kae1, Bud32, Cgi121 and Pcc1; the whole complex dimerizes. Requires Fe(2+) as cofactor.

Its subcellular location is the cytoplasm. The catalysed reaction is L-seryl-[protein] + ATP = O-phospho-L-seryl-[protein] + ADP + H(+). It carries out the reaction L-threonyl-[protein] + ATP = O-phospho-L-threonyl-[protein] + ADP + H(+). The enzyme catalyses L-threonylcarbamoyladenylate + adenosine(37) in tRNA = N(6)-L-threonylcarbamoyladenosine(37) in tRNA + AMP + H(+). Functionally, required for the formation of a threonylcarbamoyl group on adenosine at position 37 (t(6)A37) in tRNAs that read codons beginning with adenine. Is a component of the KEOPS complex that is probably involved in the transfer of the threonylcarbamoyl moiety of threonylcarbamoyl-AMP (TC-AMP) to the N6 group of A37. The Kae1 domain likely plays a direct catalytic role in this reaction. The Bud32 domain probably displays kinase activity that regulates Kae1 function. This Haloquadratum walsbyi (strain DSM 16790 / HBSQ001) protein is Probable bifunctional tRNA threonylcarbamoyladenosine biosynthesis protein.